The following is a 251-amino-acid chain: Probable phosphatase Sama_2233 (251 aa).

Residues His-8, His-10, His-16, His-41, Glu-74, His-102, His-132, Asp-193, and His-195 each contribute to the Zn(2+) site.

This sequence belongs to the PHP family. The cofactor is Zn(2+).

The chain is Probable phosphatase Sama_2233 from Shewanella amazonensis (strain ATCC BAA-1098 / SB2B).